We begin with the raw amino-acid sequence, 644 residues long: Adhesion G-protein coupled receptor F2 (644 aa).

A signal peptide spans 1–18; sequence MIPAHWLYCLMLLLPIES. Residues 19–386 lie on the Extracellular side of the membrane; it reads CRILCQASSK…ESPVLTYITY (368 aa). N-linked (GlcNAc...) asparagine glycans are attached at residues Asn-155, Asn-219, Asn-293, and Asn-311. In terms of domain architecture, GAIN-B spans 233–377; sequence SRGSLGKNFT…SILMSPNTLE (145 aa). Disulfide bonds link Cys-329-Cys-356 and Cys-344-Cys-358. Positions 329 to 377 are GPS; the sequence is CVGWHSLESRWDWRACKTIQENSRQAVCRCRPNKLYTSFSILMSPNTLE. Residues 387–407 form a helical membrane-spanning segment; it reads IGLGISICSLIICLAIEVLVW. At 408 to 422 the chain is on the cytoplasmic side; that stretch reads SQVTKTEISYLRHLC. Residues 423–443 form a helical membrane-spanning segment; the sequence is IANIAATLLMADAWFIVASFL. The Extracellular portion of the chain corresponds to 444 to 465; the sequence is SGPVLHHNGCVAATFFVHFFYL. A helical membrane pass occupies residues 466-486; it reads SVFFWMLAKALLILYGILIVF. The Cytoplasmic portion of the chain corresponds to 487–493; that stretch reads HTLPKSC. Residues 494-514 traverse the membrane as a helical segment; that stretch reads LVASLFSVGYGCPLVIAIITL. Residues 515–541 are Extracellular-facing; that stretch reads AVTEPGKGYLRPEACWLNWDMTKALLA. A helical membrane pass occupies residues 542–562; the sequence is FVVPALAIVVVNLITVTMVII. Topologically, residues 563 to 585 are cytoplasmic; sequence KTQRAAIGSSMFQEVRAIVRICK. A helical transmembrane segment spans residues 586–606; that stretch reads NIAILTPLLGLTWGFGIATVI. The Extracellular portion of the chain corresponds to 607–610; sequence NGHS. A helical transmembrane segment spans residues 611-631; that stretch reads LAFHIIFSLLNALQVSPDAAV.

It belongs to the G-protein coupled receptor 2 family. Adhesion G-protein coupled receptor (ADGR) subfamily. Mainly expressed in skin and heart, and very weakly in lung and spleen. Detected in all epidermal layers of skin.

Its subcellular location is the membrane. Orphan receptor. This chain is Adhesion G-protein coupled receptor F2 (Adgrf2), found in Mus musculus (Mouse).